Here is a 207-residue protein sequence, read N- to C-terminus: Nucleoplasmin-2 (207 aa).

Polar residues predominate over residues 1–15 (MSRHSTSSVTETTAK). Disordered regions lie at residues 1–20 (MSRH…MLWG) and 121–207 (DLTW…VTKK). Residues 123-147 (TWEDDEEEEEEEEEEDEDEDADISL) show a composition bias toward acidic residues. Residues 129-152 (EEEEEEEEEDEDEDADISLEEIPV) form an acidic tract A2 region. A Bipartite nuclear localization signal motif is present at residues 165–180 (SIAKKKKVEKEEDETV). Over residues 198–207 (PRAKKPVTKK) the composition is skewed to basic residues.

This sequence belongs to the nucleoplasmin family. In terms of assembly, homopentamer, when bound to H2A-H2B dimers only. Homodecamer of two stacked pentamers, when bound to H2A-H2B dimers and H3-H4 tetramers simultaneously. Ovary specific.

Its subcellular location is the nucleus. Core histones chaperone involved in chromatin reprogramming, specially during fertilization and early embryonic development. Probably involved in sperm DNA decondensation during fertilization. The sequence is that of Nucleoplasmin-2 (Npm2) from Mus musculus (Mouse).